Here is a 62-residue protein sequence, read N- to C-terminus: Photosystem II reaction center protein Z (62 aa).

The next 2 helical transmembrane spans lie at 8–28 (TVLALIATSFLMVIGVPVIFA) and 41–61 (FSGALLWISLVFAVGILNSFV).

This sequence belongs to the PsbZ family. As to quaternary structure, PSII is composed of 1 copy each of membrane proteins PsbA, PsbB, PsbC, PsbD, PsbE, PsbF, PsbH, PsbI, PsbJ, PsbK, PsbL, PsbM, PsbT, PsbY, PsbZ, Psb30/Ycf12, at least 3 peripheral proteins of the oxygen-evolving complex and a large number of cofactors. It forms dimeric complexes.

It is found in the plastid. The protein localises to the chloroplast thylakoid membrane. In terms of biological role, may control the interaction of photosystem II (PSII) cores with the light-harvesting antenna, regulates electron flow through the 2 photosystem reaction centers. PSII is a light-driven water plastoquinone oxidoreductase, using light energy to abstract electrons from H(2)O, generating a proton gradient subsequently used for ATP formation. This Mesostigma viride (Green alga) protein is Photosystem II reaction center protein Z.